The chain runs to 362 residues: Cobalt-precorrin-5B C(1)-methyltransferase (362 aa).

The protein belongs to the CbiD family.

The catalysed reaction is Co-precorrin-5B + S-adenosyl-L-methionine = Co-precorrin-6A + S-adenosyl-L-homocysteine. It participates in cofactor biosynthesis; adenosylcobalamin biosynthesis; cob(II)yrinate a,c-diamide from sirohydrochlorin (anaerobic route): step 6/10. Functionally, catalyzes the methylation of C-1 in cobalt-precorrin-5B to form cobalt-precorrin-6A. The sequence is that of Cobalt-precorrin-5B C(1)-methyltransferase from Desulfotalea psychrophila (strain LSv54 / DSM 12343).